Here is a 173-residue protein sequence, read N- to C-terminus: Shikimate kinase 1 (173 aa).

14–19 contributes to the ATP binding site; it reads GAGKST. Ser-18 serves as a coordination point for Mg(2+). The substrate site is built by Asp-36, Arg-60, and Gly-82. Arg-120 is a binding site for ATP. Residue Arg-140 coordinates substrate. Gln-157 serves as a coordination point for ATP.

It belongs to the shikimate kinase family. In terms of assembly, monomer. Requires Mg(2+) as cofactor.

It is found in the cytoplasm. The catalysed reaction is shikimate + ATP = 3-phosphoshikimate + ADP + H(+). It participates in metabolic intermediate biosynthesis; chorismate biosynthesis; chorismate from D-erythrose 4-phosphate and phosphoenolpyruvate: step 5/7. Its function is as follows. Catalyzes the specific phosphorylation of the 3-hydroxyl group of shikimic acid using ATP as a cosubstrate. The sequence is that of Shikimate kinase 1 from Sodalis glossinidius (strain morsitans).